We begin with the raw amino-acid sequence, 427 residues long: Enolase (427 aa).

Q163 is a (2R)-2-phosphoglycerate binding site. E205 (proton donor) is an active-site residue. Mg(2+) contacts are provided by D242, E285, and D312. Residues K337, R366, S367, and K388 each contribute to the (2R)-2-phosphoglycerate site. K337 (proton acceptor) is an active-site residue.

The protein belongs to the enolase family. Mg(2+) is required as a cofactor.

Its subcellular location is the cytoplasm. It is found in the secreted. It localises to the cell surface. It carries out the reaction (2R)-2-phosphoglycerate = phosphoenolpyruvate + H2O. The protein operates within carbohydrate degradation; glycolysis; pyruvate from D-glyceraldehyde 3-phosphate: step 4/5. Functionally, catalyzes the reversible conversion of 2-phosphoglycerate (2-PG) into phosphoenolpyruvate (PEP). It is essential for the degradation of carbohydrates via glycolysis. In Beijerinckia indica subsp. indica (strain ATCC 9039 / DSM 1715 / NCIMB 8712), this protein is Enolase.